A 153-amino-acid chain; its full sequence is Putative transmembrane protein INAFM2 (153 aa).

The segment covering 1-23 has biased composition (basic and acidic residues); sequence MKERDAAPAERGKPATYTGDKKA. The segment at 1 to 24 is disordered; it reads MKERDAAPAERGKPATYTGDKKAK. Residues 36-56 traverse the membrane as a helical segment; sequence LATVFAYVLSVSLAAIVLAVY. A disordered region spans residues 66–153; that stretch reads AGTSGGAAGP…EETAAAPGSR (88 aa). Low complexity predominate over residues 79-101; that stretch reads GSNATGPSGTSGAAAAGPNTTGS. Over residues 118-131 the composition is skewed to pro residues; sequence PAPPEPPADSPPAG.

The protein localises to the membrane. This is Putative transmembrane protein INAFM2 from Homo sapiens (Human).